The following is a 533-amino-acid chain: Calcium-dependent protein kinase 12 (533 aa).

The tract at residues 1–77 (MGNCFTKTYE…RASGGGGEMG (77 aa)) is disordered. The N-myristoyl glycine moiety is linked to residue Gly-2. Residues 26 to 38 (ERSKARGGDEPGT) are compositionally biased toward basic and acidic residues. Residues 57-69 (GSSSAAGALSRRA) show a composition bias toward low complexity. The 259-residue stretch at 91-349 (YQLDRKLGSG…ASQALEHRWL (259 aa)) folds into the Protein kinase domain. Residues 97-105 (LGSGQFGTT) and Lys-120 each bind ATP. Asp-215 acts as the Proton acceptor in catalysis. The interval 354–384 (ASDRPIDSAVLSRMKQFKAMNKLKQLALKVI) is autoinhibitory domain. EF-hand domains are found at residues 391 to 426 (EEIKGLKQMFNNMDTDRSGTITVEELKVGLTKLGSR), 427 to 462 (ISEAEVQKLMEAVDVDKSGSIDYSEFLTAMINKHKL), 463 to 498 (EKEEDLLRAFQHFDKDNSGYITRDELEQAMAEYGMG), and 499 to 533 (DEANIKQVLDEVDKDKDGRIDYEEFVEMMRKGIQT). Asp-404, Asp-406, Ser-408, Thr-410, Glu-415, Asp-440, Asp-442, Ser-444, Ser-446, Glu-451, Asp-476, Asp-478, Ser-480, Tyr-482, Glu-487, Asp-511, Asp-513, Asp-515, Arg-517, and Glu-522 together coordinate Ca(2+).

It belongs to the protein kinase superfamily. Ser/Thr protein kinase family. CDPK subfamily. Expressed in roots, leaf blades and developing seeds. Expressed in vascular tissues of roots and leaf blades. Expressed in the phloem tissue of the large vascular bundle in leaf blades.

The protein resides in the membrane. The enzyme catalyses L-seryl-[protein] + ATP = O-phospho-L-seryl-[protein] + ADP + H(+). The catalysed reaction is L-threonyl-[protein] + ATP = O-phospho-L-threonyl-[protein] + ADP + H(+). With respect to regulation, activated by calcium. Autophosphorylation may play an important role in the regulation of the kinase activity. Its function is as follows. May play a role in signal transduction pathways that involve calcium as a second messenger. Functions in signal transduction pathways that positively regulate responses to low-nitrogen. Functions in multiple signaling pathways, positively regulating salt tolerance and negatively modulating rice blast fungus resistance. May promote tolerance to salt stress by negatively regulating NADPH oxidase and positively regulating reactive oxygen species (ROS) scavengers. The polypeptide is Calcium-dependent protein kinase 12 (Oryza sativa subsp. japonica (Rice)).